The chain runs to 637 residues: Chaperone protein HtpG (637 aa).

The segment at 1–334 (MQDVVNSEKL…SSDLPLNISR (334 aa)) is a; substrate-binding. The tract at residues 335–558 (ETLQNNKVIE…DGSMDIRMER (224 aa)) is b. Positions 559 to 637 (FLREQKQLNY…MNNVLVKVYQ (79 aa)) are c.

The protein belongs to the heat shock protein 90 family. Homodimer.

Its subcellular location is the cytoplasm. Its function is as follows. Molecular chaperone. Has ATPase activity. This chain is Chaperone protein HtpG, found in Ehrlichia canis (strain Jake).